The sequence spans 1496 residues: MILRRLVLAGSLLLATAFTSAKKADSPIITATRFDHEPINLFYFGDSDVVMLQDIKNGDVYVSRDAGVKWDMVNLDGLKGQALSLWSHPTDRTKAYILGKAGKHWVTNDQAVSWHEFSADVEFFQSLFPLVFHGKDSDRVLLQGHKCVGRDCKEVTYYTTDGFKTVDILIENARGCNWAVSTPIFGDGLNLSKEVNDRIFCIVPGLQSPWSDYNRLLYSDRFFKQDSGTEAPLDSGRAVSGVVRTASVKKYLLAAAKSARTSELALYVTDDGSQWHRAEFDGQRVEEDAYTVLESTNYSIQIDVVAETPSAPMGTLFTSNSNGTYFTRNIDHTNRNGLGFVDFEKIATIQGIILVNTVKNWEDVEMSALVEKKIISQISFDDGRTFQPLKAGKHDLHLHSVTHLSNSGRVFSSPAPGLVMGVGNTGGHLKDYYDGDLYVSDDAGITWRKALDEAHKYEFGDQGSVIVAVFDEGRTGKISYSLNHGKDWKEASLPDGIKIRARILTTMPDSTGLKFLLVGSSKRDSDVEHYVISISFTDMEERTCGKDDFETWPARLNEKNEPDCLMGHKQFYQRRKADVDCFIKKKFQEPVPQFEPCKCTVEDFECDFNFIRSTDGKSCVPARSLPVPEGACKKPNDKYMGSSGFRLIPGNACIREGGVELDKQIERVCTDTLTVPVSGEIVVQKTFFTADNYKGYFYLERKDSSNGDDETVIMITSELQIYITRDHGKNWKEIFPGETITRIVPHQYFDDVAYFLTNSGDGWYTLDRGENFRKFKAPIPPNQDKLPVLSFHPERRDWLIWTGAEECKTRGPQCHSVAYYSTNHGSEWHFLMQYVRRCEFIKREARGSSNNLVFCEQFENENPLNHHLQLLSTDDWFSEKKVHYNNILDFATMQEFIIVAVRGEKPEDSLSVGVSVDGETFAYADLPANVQIPVQRAYTVLESRTHAAFLHVTVNNVEDHEYGSIIKSNSNGTSYVLSLSAVNRNTYGYADFEKMQGMEGVAMANVVGNVADVEKGAAKKYRTMITHNDGAEWALLSPPSKDSEGRDYSCSTKGGKPTDKCALHLHSYTERADPRDTYSSPSAIGVMLGTGNVGEYLTLKSDADTFITRDGGITWQEVRKDRYQWEFGDSGSIIVIVPEARPTKTLFYSLDEGKSWKEFQFTEVEMLIRDISTVPSDTSRNFLLWGNEVGNGKKPGVAAVNIDFSNLKERHKQCVLNEEKPEADDYYLWEPMHPFQPNGCLFGHRAKYHRKRPDRDCFIGRELQHLDSIGDICECTRSDYECDYNYEPQIDGTCAPVPGLKPLDPKLICTEDPKAVEWYEPTGYRRIPLTKCEGGKQLHHIIPHACPNKEEEFLKKHPGLRGVGLFFVIMSPIGLAAAIGYYVYTRWDGKFGRIRLGDTGSGGFFASDSLLVSIPVAIVAGVVAVATALPLLASSLWRSVRGYARVPGGSSSQRVYSSRAAFAAQRADYAGVVDDEDELLGAEDFDEEENDDRGQV.

The first 21 residues, M1–A21, serve as a signal peptide directing secretion. The Lumenal segment spans residues K22 to G1362. One copy of the BNR 1 repeat lies at Y61 to D71. 3 N-linked (GlcNAc...) asparagine glycosylation sites follow: N190, N297, and N322. BNR repeat units follow at residues Q377–Q387, Y438–R448, Y480–K489, Y722–K732, and Y819–H829. The N-linked (GlcNAc...) asparagine glycan is linked to N971. 2 BNR repeats span residues F1106 to Q1116 and F1147 to K1157. The chain crosses the membrane as a helical span at residues V1363–V1383. The Cytoplasmic segment spans residues Y1384–S1409. Residues L1410–P1430 traverse the membrane as a helical segment. Topologically, residues L1431–V1496 are lumenal.

Belongs to the VPS10-related sortilin family.

The protein resides in the golgi apparatus. The protein localises to the trans-Golgi network membrane. Its subcellular location is the prevacuolar compartment membrane. Functions as a sorting receptor in the Golgi compartment required for the intracellular sorting and delivery of soluble vacuolar proteins, like carboxypeptidase Y (CPY) and proteinase A. Executes multiple rounds of sorting by cycling between the late Golgi and a prevacuolar endosome-like compartment. In Paracoccidioides brasiliensis (strain Pb03), this protein is Vacuolar protein sorting/targeting protein 10 (VPS10).